Here is a 254-residue protein sequence, read N- to C-terminus: NAD kinase (254 aa).

The active-site Proton acceptor is Asp44. NAD(+)-binding positions include 44 to 45 (DG), 114 to 115 (NE), Asp144, Ala152, 155 to 160 (TAYNYS), and Ala179.

Belongs to the NAD kinase family. A divalent metal cation is required as a cofactor.

It is found in the cytoplasm. The enzyme catalyses NAD(+) + ATP = ADP + NADP(+) + H(+). Involved in the regulation of the intracellular balance of NAD and NADP, and is a key enzyme in the biosynthesis of NADP. Catalyzes specifically the phosphorylation on 2'-hydroxyl of the adenosine moiety of NAD to yield NADP. In Cereibacter sphaeroides (strain ATCC 17029 / ATH 2.4.9) (Rhodobacter sphaeroides), this protein is NAD kinase.